Consider the following 319-residue polypeptide: Beta-ketoacyl-[acyl-carrier-protein] synthase III (319 aa).

Residues cysteine 113 and histidine 246 contribute to the active site. Residues 247 to 251 (QANIR) are ACP-binding. Residue asparagine 276 is part of the active site.

This sequence belongs to the thiolase-like superfamily. FabH family. As to quaternary structure, homodimer.

Its subcellular location is the cytoplasm. It carries out the reaction malonyl-[ACP] + acetyl-CoA + H(+) = 3-oxobutanoyl-[ACP] + CO2 + CoA. Its pathway is lipid metabolism; fatty acid biosynthesis. In terms of biological role, catalyzes the condensation reaction of fatty acid synthesis by the addition to an acyl acceptor of two carbons from malonyl-ACP. Catalyzes the first condensation reaction which initiates fatty acid synthesis and may therefore play a role in governing the total rate of fatty acid production. Possesses both acetoacetyl-ACP synthase and acetyl transacylase activities. Its substrate specificity determines the biosynthesis of branched-chain and/or straight-chain of fatty acids. This is Beta-ketoacyl-[acyl-carrier-protein] synthase III from Ehrlichia ruminantium (strain Welgevonden).